The sequence spans 745 residues: Phosphoribosylformylglycinamidine synthase subunit PurL (745 aa).

Residue H50 is part of the active site. Positions 53 and 92 each coordinate ATP. E94 provides a ligand contact to Mg(2+). Substrate contacts are provided by residues 95–98 and R117; that span reads SHNH. H96 functions as the Proton acceptor in the catalytic mechanism. D118 contacts Mg(2+). Q241 provides a ligand contact to substrate. D269 contacts Mg(2+). 313 to 315 contacts substrate; the sequence is ESQ. ATP contacts are provided by D495 and G532. Position 533 (N533) interacts with Mg(2+). Position 535 (S535) interacts with substrate.

It belongs to the FGAMS family. As to quaternary structure, monomer. Part of the FGAM synthase complex composed of 1 PurL, 1 PurQ and 2 PurS subunits.

The protein localises to the cytoplasm. It carries out the reaction N(2)-formyl-N(1)-(5-phospho-beta-D-ribosyl)glycinamide + L-glutamine + ATP + H2O = 2-formamido-N(1)-(5-O-phospho-beta-D-ribosyl)acetamidine + L-glutamate + ADP + phosphate + H(+). Its pathway is purine metabolism; IMP biosynthesis via de novo pathway; 5-amino-1-(5-phospho-D-ribosyl)imidazole from N(2)-formyl-N(1)-(5-phospho-D-ribosyl)glycinamide: step 1/2. Its function is as follows. Part of the phosphoribosylformylglycinamidine synthase complex involved in the purines biosynthetic pathway. Catalyzes the ATP-dependent conversion of formylglycinamide ribonucleotide (FGAR) and glutamine to yield formylglycinamidine ribonucleotide (FGAM) and glutamate. The FGAM synthase complex is composed of three subunits. PurQ produces an ammonia molecule by converting glutamine to glutamate. PurL transfers the ammonia molecule to FGAR to form FGAM in an ATP-dependent manner. PurS interacts with PurQ and PurL and is thought to assist in the transfer of the ammonia molecule from PurQ to PurL. The sequence is that of Phosphoribosylformylglycinamidine synthase subunit PurL from Allorhizobium ampelinum (strain ATCC BAA-846 / DSM 112012 / S4) (Agrobacterium vitis (strain S4)).